A 1018-amino-acid polypeptide reads, in one-letter code: Inner centromere protein pic1 (1018 aa).

Serine 171 is modified (phosphoserine). Disordered regions lie at residues 184–207 (VPLR…PKQK), 247–287 (RTKD…SSSP), 306–365 (AKES…PPEI), 522–556 (TRKS…LPPS), 570–756 (EPLH…TSKP), 781–813 (EPDS…EDRK), 848–867 (TKQN…SQSN), and 877–944 (HAPA…LPSW). Composition is skewed to polar residues over residues 189–199 (TSPSPSETADS) and 268–287 (PSTT…SSSP). Low complexity predominate over residues 309 to 320 (SLTSSTRLSTSY). Polar residues-rich tracts occupy residues 329–339 (VAFSSETVTSS) and 522–554 (TRKS…SSLP). Basic and acidic residues-rich tracts occupy residues 570-580 (EPLHDDSRQNS) and 624-644 (RSSE…RELS). The span at 645–664 (NNEFPSRQTKTVTSANSSNI) shows a compositional bias: polar residues. Composition is skewed to basic and acidic residues over residues 665 to 679 (RDME…RSEP) and 692 to 702 (KPFEEKSEKPT). Composition is skewed to polar residues over residues 705–719 (RLVT…SWHS) and 784–808 (SVTS…TNSQ). Residues 890-902 (PSSKSPLLKTPKS) show a composition bias toward low complexity.

This sequence belongs to the INCENP family. As to quaternary structure, component of the CPC complex at least composed of ark1, bir1 and pic1.

It is found in the nucleus. The protein localises to the cytoplasm. The protein resides in the cytoskeleton. Its subcellular location is the spindle. Its function is as follows. Component of the chromosomal passenger complex (CPC), a complex that acts as a key regulator of mitosis. Has a role in sister chromatid cohesion and condensation. This is Inner centromere protein pic1 (pic1) from Schizosaccharomyces pombe (strain 972 / ATCC 24843) (Fission yeast).